Consider the following 240-residue polypeptide: 1-(5-phosphoribosyl)-5-[(5-phosphoribosylamino)methylideneamino] imidazole-4-carboxamide isomerase 1 (240 aa).

The active-site Proton acceptor is the aspartate 8. The active-site Proton donor is the aspartate 129.

Belongs to the HisA/HisF family.

Its subcellular location is the cytoplasm. It carries out the reaction 1-(5-phospho-beta-D-ribosyl)-5-[(5-phospho-beta-D-ribosylamino)methylideneamino]imidazole-4-carboxamide = 5-[(5-phospho-1-deoxy-D-ribulos-1-ylimino)methylamino]-1-(5-phospho-beta-D-ribosyl)imidazole-4-carboxamide. It participates in amino-acid biosynthesis; L-histidine biosynthesis; L-histidine from 5-phospho-alpha-D-ribose 1-diphosphate: step 4/9. This is 1-(5-phosphoribosyl)-5-[(5-phosphoribosylamino)methylideneamino] imidazole-4-carboxamide isomerase 1 from Ruegeria pomeroyi (strain ATCC 700808 / DSM 15171 / DSS-3) (Silicibacter pomeroyi).